Consider the following 211-residue polypeptide: Uracil phosphoribosyltransferase (211 aa).

Residues arginine 77, arginine 102, and 129-137 (DPMLATGGS) contribute to the 5-phospho-alpha-D-ribose 1-diphosphate site. Uracil is bound by residues isoleucine 192 and 197–199 (GDA). A 5-phospho-alpha-D-ribose 1-diphosphate-binding site is contributed by aspartate 198.

Belongs to the UPRTase family. Requires Mg(2+) as cofactor.

The enzyme catalyses UMP + diphosphate = 5-phospho-alpha-D-ribose 1-diphosphate + uracil. It functions in the pathway pyrimidine metabolism; UMP biosynthesis via salvage pathway; UMP from uracil: step 1/1. Its activity is regulated as follows. Allosterically activated by GTP. In terms of biological role, catalyzes the conversion of uracil and 5-phospho-alpha-D-ribose 1-diphosphate (PRPP) to UMP and diphosphate. In Corynebacterium aurimucosum (strain ATCC 700975 / DSM 44827 / CIP 107346 / CN-1) (Corynebacterium nigricans), this protein is Uracil phosphoribosyltransferase.